The chain runs to 500 residues: Glycerol kinase (500 aa).

An ADP-binding site is contributed by T11. ATP-binding residues include T11, T12, and S13. Residue T11 coordinates sn-glycerol 3-phosphate. R15 is an ADP binding site. 4 residues coordinate sn-glycerol 3-phosphate: R81, E82, Y133, and D242. R81, E82, Y133, D242, and Q243 together coordinate glycerol. ADP-binding residues include T264 and G307. Positions 264, 307, 311, and 411 each coordinate ATP. G411 serves as a coordination point for ADP.

The protein belongs to the FGGY kinase family.

The enzyme catalyses glycerol + ATP = sn-glycerol 3-phosphate + ADP + H(+). It participates in polyol metabolism; glycerol degradation via glycerol kinase pathway; sn-glycerol 3-phosphate from glycerol: step 1/1. Its activity is regulated as follows. Inhibited by fructose 1,6-bisphosphate (FBP). In terms of biological role, key enzyme in the regulation of glycerol uptake and metabolism. Catalyzes the phosphorylation of glycerol to yield sn-glycerol 3-phosphate. This is Glycerol kinase from Rhodopseudomonas palustris (strain ATCC BAA-98 / CGA009).